The primary structure comprises 152 residues: TOMM20-like protein 1 (152 aa).

The Mitochondrial intermembrane portion of the chain corresponds to 1–9 (MPSVRSLLR). Residues 10–29 (LLAAAAACGAFAFLGYCIYL) form a helical membrane-spanning segment. Over 30 to 152 (NRKRRGDPAF…EQDCLEDDPD (123 aa)) the chain is Cytoplasmic. Positions 43–62 (LRDKRRAEPQKAEEQGTQLW) are disordered. The segment covering 47–56 (RRAEPQKAEE) has biased composition (basic and acidic residues).

The protein belongs to the Tom20 family.

The protein resides in the mitochondrion outer membrane. This is TOMM20-like protein 1 (TOMM20L) from Homo sapiens (Human).